A 185-amino-acid polypeptide reads, in one-letter code: Elongation factor P (185 aa).

This sequence belongs to the elongation factor P family.

Its subcellular location is the cytoplasm. It participates in protein biosynthesis; polypeptide chain elongation. Functionally, involved in peptide bond synthesis. Stimulates efficient translation and peptide-bond synthesis on native or reconstituted 70S ribosomes in vitro. Probably functions indirectly by altering the affinity of the ribosome for aminoacyl-tRNA, thus increasing their reactivity as acceptors for peptidyl transferase. This is Elongation factor P from Methylobacillus flagellatus (strain ATCC 51484 / DSM 6875 / VKM B-1610 / KT).